Consider the following 84-residue polypeptide: Hydramacin-1 (84 aa).

The first 24 residues, 1 to 24 (MRTVVFFILVSIFLVALKPTGTQA), serve as a signal peptide directing secretion. Q25 bears the Pyrrolidone carboxylic acid mark. Intrachain disulfides connect C29/C72, C36/C65, C51/C81, and C55/C83.

In terms of tissue distribution, expressed in the endodermal epithelium.

It is found in the secreted. The protein localises to the target cell membrane. Cationic antimicrobial peptide potently active against Gram-positive and Gram-negative bacteria including multi-resistant human pathogenic strains. Is not active against the Gram-positive Coccus species, Gram-negative non-fermentation species and against the fungus C.albicans. It leads to aggregation of bacteria as an initial step of its bactericidal mechanism. Aggregated cells are connected via electron-dense contacts and adopt a thorn apple-like morphology. Hydramycin contains a belt of positively charged residues that separate two hydrophobic areas. This structure may explain the observed aggregation of bacteria, since each of these areas can immerse into the outer leaflets of the membranes of two individual bacteria. Is able to permeabilize membranes of viable bacteria at low and neutral pH values, but no pore-forming activity is not detected. This Hydra vulgaris (Hydra) protein is Hydramacin-1.